Consider the following 430-residue polypeptide: Lipoyl synthase, mitochondrial (430 aa).

The N-terminal 37 residues, 1–37, are a transit peptide targeting the mitochondrion; sequence MATSAGKLRTLYSAHSSLSSLPPSARPTLQLATLRSY. The span at 39–55 shows a compositional bias: polar residues; the sequence is TTTPHDSPIGNTSNTPP. The interval 39-58 is disordered; it reads TTTPHDSPIGNTSNTPPTVK. Cysteine 141, cysteine 146, cysteine 152, cysteine 172, cysteine 176, cysteine 179, and serine 387 together coordinate [4Fe-4S] cluster. A Radical SAM core domain is found at 155–376; that stretch reads GSSKSAATAT…KERALEMGFL (222 aa).

The protein belongs to the radical SAM superfamily. Lipoyl synthase family. [4Fe-4S] cluster serves as cofactor.

Its subcellular location is the mitochondrion. The enzyme catalyses [[Fe-S] cluster scaffold protein carrying a second [4Fe-4S](2+) cluster] + N(6)-octanoyl-L-lysyl-[protein] + 2 oxidized [2Fe-2S]-[ferredoxin] + 2 S-adenosyl-L-methionine + 4 H(+) = [[Fe-S] cluster scaffold protein] + N(6)-[(R)-dihydrolipoyl]-L-lysyl-[protein] + 4 Fe(3+) + 2 hydrogen sulfide + 2 5'-deoxyadenosine + 2 L-methionine + 2 reduced [2Fe-2S]-[ferredoxin]. It participates in protein modification; protein lipoylation via endogenous pathway; protein N(6)-(lipoyl)lysine from octanoyl-[acyl-carrier-protein]: step 2/2. Functionally, catalyzes the radical-mediated insertion of two sulfur atoms into the C-6 and C-8 positions of the octanoyl moiety bound to the lipoyl domains of lipoate-dependent enzymes, thereby converting the octanoylated domains into lipoylated derivatives. The polypeptide is Lipoyl synthase, mitochondrial (Ajellomyces capsulatus (strain G186AR / H82 / ATCC MYA-2454 / RMSCC 2432) (Darling's disease fungus)).